A 205-amino-acid chain; its full sequence is Ribosome maturation factor RimP (205 aa).

The span at 1–13 (MSNAEATTSSDRT) shows a compositional bias: polar residues. Residues 1-27 (MSNAEATTSSDRTGTGKAEAESVHNPE) form a disordered region. Basic and acidic residues predominate over residues 18–27 (AEAESVHNPE).

Belongs to the RimP family.

The protein resides in the cytoplasm. In terms of biological role, required for maturation of 30S ribosomal subunits. The polypeptide is Ribosome maturation factor RimP (Arthrobacter sp. (strain FB24)).